We begin with the raw amino-acid sequence, 863 residues long: Importin subunit beta-1 (863 aa).

19 HEAT repeats span residues 2–31, 33–62, 85–124, 129–159, 170–201, 212–248, 253–299, 314–360, 364–392, 399–439, 449–481, 496–530, 536–586, 592–630, 635–671, 677–715, 720–767, 778–815, and 822–861; these read NAGE…AART, FAQY…LALK, VEIK…ELAT, DLMV…YICE, SNAI…LYDS, EYER…MHLY, PFYM…EIQE, FARA…QVVG, VNPV…AFGS, VAML…SSFV, LSPM…VCHF, YEAI…LITF, LPMI…IIRR, RTSS…MNSL, EVYV…LARA, LPYC…ALAI, QTYL…ITQA, QPYV…LAES, and KSYF…KRQA. The Importin N-terminal domain occupies 21 to 101; the sequence is AEKQLENAAR…KSLALQTLGS (81 aa).

Belongs to the importin beta family. Importin beta-1 subfamily. As to quaternary structure, forms a complex with an importin alpha subunit. Interacts with Ran; interacts specifically with the GTP-bound form of Ran (GTP-Ran), protecting it from GTP hydrolysis and nucleotide exchange. Interacts with nucleoporins.

Its subcellular location is the cytoplasm. It localises to the nucleus envelope. The protein localises to the nucleus. The protein resides in the nuclear pore complex. Importin beta subunit that functions in nuclear protein import through association with the importin alpha subunit, which binds to the clasical nuclear localization signal (cNLS) in cargo substrates. Docking of the importin/substrate complex to the nuclear pore complex (NPC) is mediated by importin beta through binding to nucleoporin FxFG repeats and the complex is subsequently translocated through the pore by an energy requiring, Ran-dependent mechanism. At the nucleoplasmic side of the NPC, GTP-Ran binds to importin beta and the three components separate, leading to release of the cargo. Importin alpha and beta are re-exported from the nucleus to the cytoplasm where GTP hydrolysis releases Ran from importin beta. The directionality of nuclear import is thought to be conferred by an asymmetric distribution of the GTP- and GDP-bound forms of Ran between the cytoplasm and nucleus. This Schizosaccharomyces pombe (strain 972 / ATCC 24843) (Fission yeast) protein is Importin subunit beta-1.